The primary structure comprises 210 residues: Fibrillarin-like rRNA/tRNA 2'-O-methyltransferase (210 aa).

Residues 72–73 (TT), 88–89 (EF), 113–114 (DA), and 134–137 (DVAT) each bind S-adenosyl-L-methionine.

It belongs to the methyltransferase superfamily. Fibrillarin family. As to quaternary structure, interacts with nop5. Component of box C/D small ribonucleoprotein (sRNP) particles that contain rpl7ae, FlpA and nop5, plus a guide RNA.

In terms of biological role, involved in pre-rRNA and tRNA processing. Utilizes the methyl donor S-adenosyl-L-methionine to catalyze the site-specific 2'-hydroxyl methylation of ribose moieties in rRNA and tRNA. Site specificity is provided by a guide RNA that base pairs with the substrate. Methylation occurs at a characteristic distance from the sequence involved in base pairing with the guide RNA. The chain is Fibrillarin-like rRNA/tRNA 2'-O-methyltransferase from Halobacterium salinarum (strain ATCC 29341 / DSM 671 / R1).